The chain runs to 115 residues: Ribosome-binding factor A (115 aa).

Belongs to the RbfA family. In terms of assembly, monomer. Binds 30S ribosomal subunits, but not 50S ribosomal subunits or 70S ribosomes.

It is found in the cytoplasm. Functionally, one of several proteins that assist in the late maturation steps of the functional core of the 30S ribosomal subunit. Associates with free 30S ribosomal subunits (but not with 30S subunits that are part of 70S ribosomes or polysomes). Required for efficient processing of 16S rRNA. May interact with the 5'-terminal helix region of 16S rRNA. This is Ribosome-binding factor A from Staphylococcus carnosus (strain TM300).